The chain runs to 4001 residues: Ankyrin repeat and KH domain-containing protein mask (4001 aa).

The span at 1–14 (MNNDAKNHESDDLN) shows a compositional bias: basic and acidic residues. Disordered regions lie at residues 1–61 (MNND…NRQL), 91–174 (KNEP…GGGS), and 391–494 (DTDT…FLLD). Residues 15–30 (VRSTAYFNQQTTTNQP) show a composition bias toward polar residues. Residues 38-61 (NNTGSGSGSNNNNNNTNQNPNRQL) are compositionally biased toward low complexity. The segment covering 94 to 117 (PLTTTESSGVLTNTPLPSNSRLKV) has biased composition (polar residues). The span at 118-159 (NNNNNTNNTAKMSGTSSSQSSATPTPPTASSSTTTTTTTNIS) shows a compositional bias: low complexity. The span at 160–174 (TGGGGSGSSGGGGGS) shows a compositional bias: gly residues. Composition is skewed to acidic residues over residues 408–425 (SESEEESVSEDDIPESDP) and 434–486 (VRED…EDAP). A Phosphoserine modification is found at Ser-501. ANK repeat units lie at residues 546-575 (SGFSRSLVAACTDNDVNTVKRLLCKGNVNL), 584-614 (DGESLLSMACSAGYYELAQVLLAMSAAQVED), 618-647 (KDSTPLMEAASAGHLDIVKLLLNHNADVNA), 651-680 (TGNTPLMFACAGGQVDVVKVLLKHGANVEE), 684-713 (NGHTPLMEAASAGHVEVAKVLLEHGAGINT), 718-747 (FKESALTLACYKGHLDMVRFLLQAGADQEH), 751-780 (EMHTALMEASMDGHVEVARLLLDSGAQVNM), 784-813 (SFESPLTLAACGGHVELATLLIERGANIEE), 817-846 (EGYTPLMEAAREGHEEMVALLLSKGANINA), 851-880 (TQETALTLACCGGFMEVAAFLIKEGANLEL), 881-910 (GASTPLMEASQEGHTDLVSFLLKKKANVHA), 914-943 (TGDTALTHACENGHTDAAGVLLSYGAELEH), 947-976 (GGRTPLMKACRAGHLCTVKFLIQKGANVNK), 981-1011 (NDHTALSLACAGGHQSVVELLLKNNADPFHK), and 1014-1043 (DNSTMLIEASKGGHTRVVELLFRYPNISPT). Disordered stretches follow at residues 1046 to 1067 (AASANVTQAAPTSNQPGPNQMR) and 1306 to 1376 (QPGE…PTAL). The span at 1367 to 1376 (DNNQPVPTAL) shows a compositional bias: polar residues. Phosphoserine occurs at positions 1389 and 1588. Disordered regions lie at residues 1583-1612 (GDQPKSPTETPPEMEETTMSSPTEADRLGS), 1646-1669 (SDLESECEDDAEGGAGADCEENTL), 1682-1779 (EDGI…SLPL), 1852-1872 (VVHQKQQHGEGDQQCEDDGSA), 2084-2108 (MAQHQAQQQQGVGEPLTEQQQQQLH), and 2225-2256 (TPAPSSGVSSTKSMPGGIAKKAIDKQSRKERR). Composition is skewed to acidic residues over residues 1646 to 1657 (SDLESECEDDAE), 1685 to 1704 (IIVEEEEDDEEEDDDDEEQD), and 1716 to 1759 (DDED…EPDS). Residues 1760–1776 (DQGTGNNNNNSKSGASS) are compositionally biased toward low complexity. Over residues 2084–2093 (MAQHQAQQQQ) the composition is skewed to low complexity. The span at 2228-2237 (PSSGVSSTKS) shows a compositional bias: polar residues. ANK repeat units follow at residues 2312-2341 (NHDTALTLACAGGHEELVELLINRGANIEH), 2345-2374 (KGFTPLILAATAGHDKVVDILLKHSAELEA), 2379-2408 (TKDTPLSLACSGGRYEVVELLLSVGANKEH), 2412-2441 (SDYTPLSLAASGGYVNIIKLLLSHGAEINS), 2447-2476 (LGISPLMLAAMNGHTPAVKLLLDQGSDINA), 2481-2510 (NRNTALTLACFQGRHEVVSLLLDRRANVEH), 2514-2543 (TGLTPLMEAASGGYIEVGRVLLDKGADVNA), 2549-2578 (SRDTALTIAADKGHQKFVELLLSRNASVEV), 2582-2611 (KGNSPLWLAAHGGHLSVVELLYDHNADIDS), and 2615-2644 (RRVSCLMAAFRKGHTKIVKWMVQYVSQFPS). A coiled-coil region spans residues 2674 to 2732 (AKEAQAVKANKNASILLEELDLERTREESRKAAAARRRERKKKKKMEKKEEKRRQQQGN). Ser-2687 bears the Phosphoserine mark. Thr-2698 carries the phosphothreonine modification. Residues 2699–3033 (REESRKAAAA…TSTTTAASSV (335 aa)) are disordered. The span at 2706-2719 (AAARRRERKKKKKM) shows a compositional bias: basic residues. Residues 2739 to 2762 (MQGDDDDASDKDDDSDKDDEDEEA) show a composition bias toward acidic residues. 2 positions are modified to phosphoserine: Ser-2747 and Ser-2753. A compositionally biased stretch (low complexity) spans 2793 to 2810 (SQSAQAAEAAANSVSTNS). Positions 2828 to 2839 (EPTQPVITSNSV) are enriched in polar residues. Residues 2868 to 2886 (RQLDVKKEEPALKKKEEKN) are compositionally biased toward basic and acidic residues. Residues 2906–2941 (ALPAKQQPSSSSKLQSSESASNINSSTATNTSSANT) are compositionally biased toward low complexity. Residues 2950 to 2960 (ASQTASATTLN) are compositionally biased toward polar residues. A compositionally biased stretch (basic and acidic residues) spans 2963–2975 (KRTEVDGWKEVVR). A compositionally biased stretch (polar residues) spans 2995-3004 (TATSSATSVQ). A compositionally biased stretch (low complexity) spans 3012 to 3032 (ANSSSNSSSSLTTSTTTAASS). The region spanning 3036–3100 (MTCKKVQVPV…DATKQAHMLI (65 aa)) is the KH domain. Low complexity-rich tracts occupy residues 3156–3178 (ASTTSTSSSSSASSTTPAGASYS), 3195–3227 (SGRSSTSVKSNGSSTKVSASSGSGSRSGRAGSS), and 3244–3257 (NGVIKSKSESSSKS). Disordered regions lie at residues 3156–3329 (ASTT…GQGG), 3383–3457 (KPIA…QTSQ), 3520–3636 (AVGD…PPTA), and 3744–3786 (IFPQ…GGAA). Residues 3262 to 3278 (QKSSTTLGKSSTVSPGA) are compositionally biased toward polar residues. Residues 3396–3416 (GSPTQVQQQHQTQQQQQQQLP) show a composition bias toward low complexity. Over residues 3417–3427 (QPAPVPGPQPQ) the composition is skewed to pro residues. A compositionally biased stretch (low complexity) spans 3428 to 3457 (QQPLQQQQQQQAPQQQPQQPNQQQQPQTSQ). The segment covering 3539–3559 (NILSSPVGSSKASSNHSTSPP) has biased composition (polar residues). A compositionally biased stretch (low complexity) spans 3565-3577 (QQQQQQQPQSSQQ). Residue Ser-3596 is modified to Phosphoserine. Residues 3774 to 3786 (PPGTGARQPGGAA) are compositionally biased toward low complexity. Phosphoserine is present on residues Ser-3820, Ser-3822, and Ser-3825. The tract at residues 3876–3945 (KAQPPGLQQP…HNMQAPPNMS (70 aa)) is disordered. Residues 3891–3910 (SQQQQQQPLNWLKQQPQQQQ) are compositionally biased toward low complexity.

May interact with Unc-89 (via protein kinase domain 1 or 2). Expressed ubiquitously in eye imaginal disk, slightly higher expression is seen in presumptive photoreceptors. Expressed in indirect flight muscle (IFM) (at protein level).

It localises to the cytoplasm. The protein localises to the myofibril. It is found in the sarcomere. Its subcellular location is the z line. The protein resides in the m line. Mediator of receptor tyrosine kinase (RTK) signaling, and may act either downstream of MAPK or transduce signaling through a parallel branch of the RTK pathway. Required for the development and organization of indirect flight muscle sarcomeres by regulating the formation of M line and H zone and the correct assembly of thick and thin filaments in the sarcomere. This chain is Ankyrin repeat and KH domain-containing protein mask, found in Drosophila melanogaster (Fruit fly).